The primary structure comprises 314 residues: D-alanine--D-alanine ligase (314 aa).

The region spanning 115–310 (KQVWQSVGLV…FNELVLEILA (196 aa)) is the ATP-grasp domain. Residue 141-196 (LDSLGGQGFVKPAHEGSSIGMSVVSTAQELKAAYEKAAHYDAKVLVERRIVGREFT) participates in ATP binding. Residues D264, E277, and N279 each contribute to the Mg(2+) site.

Belongs to the D-alanine--D-alanine ligase family. It depends on Mg(2+) as a cofactor. Requires Mn(2+) as cofactor.

It localises to the cytoplasm. It catalyses the reaction 2 D-alanine + ATP = D-alanyl-D-alanine + ADP + phosphate + H(+). Its pathway is cell wall biogenesis; peptidoglycan biosynthesis. Its function is as follows. Cell wall formation. The polypeptide is D-alanine--D-alanine ligase (Saccharophagus degradans (strain 2-40 / ATCC 43961 / DSM 17024)).